The chain runs to 248 residues: Exosome complex component Rrp41 (248 aa).

The protein belongs to the RNase PH family. Rrp41 subfamily. Component of the archaeal exosome complex. Forms a hexameric ring-like arrangement composed of 3 Rrp41-Rrp42 heterodimers. The hexameric ring associates with a trimer of Rrp4 and/or Csl4 subunits.

It localises to the cytoplasm. In terms of biological role, catalytic component of the exosome, which is a complex involved in RNA degradation. Has 3'-&gt;5' exoribonuclease activity. Can also synthesize heteromeric RNA-tails. This Thermoplasma volcanium (strain ATCC 51530 / DSM 4299 / JCM 9571 / NBRC 15438 / GSS1) protein is Exosome complex component Rrp41.